A 362-amino-acid polypeptide reads, in one-letter code: Adenosine deaminase (362 aa).

2 residues coordinate Zn(2+): histidine 19 and histidine 21. Residues histidine 21, aspartate 23, and glycine 181 each coordinate substrate. Histidine 208 provides a ligand contact to Zn(2+). Glutamate 211 serves as the catalytic Proton donor. Zn(2+) is bound at residue aspartate 300.

Belongs to the metallo-dependent hydrolases superfamily. Adenosine and AMP deaminases family. Adenosine deaminase subfamily. Zn(2+) is required as a cofactor.

The catalysed reaction is adenosine + H2O + H(+) = inosine + NH4(+). It carries out the reaction 2'-deoxyadenosine + H2O + H(+) = 2'-deoxyinosine + NH4(+). Functionally, catalyzes the hydrolytic deamination of adenosine and 2-deoxyadenosine. The polypeptide is Adenosine deaminase (Mycobacterium sp. (strain MCS)).